The chain runs to 397 residues: CCA-adding enzyme (397 aa).

ATP-binding residues include Gly26 and Arg29. Residues Gly26 and Arg29 each coordinate CTP. Positions 39 and 41 each coordinate Mg(2+). Positions 110, 153, 156, 159, and 162 each coordinate ATP. CTP is bound by residues Arg110, Asp153, Arg156, Arg159, and Arg162.

This sequence belongs to the tRNA nucleotidyltransferase/poly(A) polymerase family. Bacterial CCA-adding enzyme type 3 subfamily. In terms of assembly, homodimer. Mg(2+) serves as cofactor.

It carries out the reaction a tRNA precursor + 2 CTP + ATP = a tRNA with a 3' CCA end + 3 diphosphate. It catalyses the reaction a tRNA with a 3' CCA end + 2 CTP + ATP = a tRNA with a 3' CCACCA end + 3 diphosphate. Functionally, catalyzes the addition and repair of the essential 3'-terminal CCA sequence in tRNAs without using a nucleic acid template. Adds these three nucleotides in the order of C, C, and A to the tRNA nucleotide-73, using CTP and ATP as substrates and producing inorganic pyrophosphate. tRNA 3'-terminal CCA addition is required both for tRNA processing and repair. Also involved in tRNA surveillance by mediating tandem CCA addition to generate a CCACCA at the 3' terminus of unstable tRNAs. While stable tRNAs receive only 3'-terminal CCA, unstable tRNAs are marked with CCACCA and rapidly degraded. This is CCA-adding enzyme from Bacillus cereus (strain B4264).